The chain runs to 610 residues: Zinc metalloproteinase-disintegrin-like VAP1 (610 aa).

The signal sequence occupies residues 1-20; it reads MIQVLLVTISLAVFPYQGSS. A propeptide spanning residues 21 to 189 is cleaved from the precursor; that stretch reads VILESGNVND…KKASQSNLTP (169 aa). Pyrrolidone carboxylic acid (Glu) is present on Glu-190. Residues 199 to 395 enclose the Peptidase M12B domain; the sequence is KYVKLFLVAD…NMPQCILKKP (197 aa). Asn-218 is a glycosylation site (N-linked (GlcNAc...) asparagine). 3 cysteine pairs are disulfide-bonded: Cys-310–Cys-390, Cys-350–Cys-374, and Cys-352–Cys-357. Zn(2+) is bound at residue His-335. Residues 335 to 346 carry the Metal-binding motif; the sequence is HEMGHNLGMDHD. The active-site Proton acceptor is Glu-336. Zn(2+) is bound by residues His-339 and His-345. The Disintegrin domain maps to 403–488; sequence PAVCGNYFVE…AECTDRFQRN (86 aa). Ca(2+)-binding residues include Val-405, Asn-408, Phe-410, Glu-412, Glu-415, and Asp-418. Disulfide bonds link Cys-406-Cys-435, Cys-417-Cys-430, Cys-419-Cys-425, Cys-429-Cys-452, Cys-443-Cys-449, Cys-448-Cys-474, Cys-461-Cys-481, Cys-468-Cys-499, Cys-492-Cys-504, Cys-511-Cys-561, Cys-526-Cys-572, Cys-539-Cys-549, Cys-556-Cys-598, and Cys-592-Cys-603. The D/ECD-tripeptide motif lies at 467-469; the sequence is ECD. Ca(2+) contacts are provided by Asp-469, Met-470, Asp-472, Asp-483, and Arg-484.

This sequence belongs to the venom metalloproteinase (M12B) family. P-III subfamily. P-IIIc sub-subfamily. In terms of assembly, homodimer; disulfide-linked. The cofactor is Zn(2+). In terms of processing, the N-terminus is blocked. As to expression, expressed by the venom gland.

It is found in the secreted. Its activity is regulated as follows. Inhibited by EDTA and EGTA, but not by PMSF. Zinc metalloprotease that has fibrinogenolytic and hemorrhagic activities. It induces apoptosis in vascular endothelial cells (VEC), without degrading extracellular matrix (it cannot cleave collagen) or inhibiting adhesion of VEC. VAP1-induced apoptosis is inhibited by antibodies for integrin alpha-3, alpha-6, beta-1 and CD9. Apoptosis is accompanied by severe cell fragmentation, which is controlled by caspases. In Crotalus atrox (Western diamondback rattlesnake), this protein is Zinc metalloproteinase-disintegrin-like VAP1.